The chain runs to 452 residues: 2-succinylbenzoate--CoA ligase (452 aa).

The protein belongs to the ATP-dependent AMP-binding enzyme family. MenE subfamily.

It carries out the reaction 2-succinylbenzoate + ATP + CoA = 2-succinylbenzoyl-CoA + AMP + diphosphate. The protein operates within quinol/quinone metabolism; 1,4-dihydroxy-2-naphthoate biosynthesis; 1,4-dihydroxy-2-naphthoate from chorismate: step 5/7. It functions in the pathway quinol/quinone metabolism; menaquinone biosynthesis. Its function is as follows. Converts 2-succinylbenzoate (OSB) to 2-succinylbenzoyl-CoA (OSB-CoA). The polypeptide is 2-succinylbenzoate--CoA ligase (Haemophilus influenzae (strain ATCC 51907 / DSM 11121 / KW20 / Rd)).